Reading from the N-terminus, the 186-residue chain is Transcriptional repressor NrdR (186 aa).

Residues 1–24 (MRCPYCGGLDTQVKDSRPSDDASA) form a disordered region. Residues 3–34 (CPYCGGLDTQVKDSRPSDDASAIRRRRICPDC) fold into a zinc finger. A compositionally biased stretch (basic and acidic residues) spans 12–24 (QVKDSRPSDDASA). Residues 49–139 (LTVVKRSGRR…VYKNFREARD (91 aa)) form the ATP-cone domain. Residues 146–186 (RLNGAGRPGGEPEPPDEAAPGPAAAPGEGGEAPARRARSRA) are disordered.

The protein belongs to the NrdR family. The cofactor is Zn(2+).

Negatively regulates transcription of bacterial ribonucleotide reductase nrd genes and operons by binding to NrdR-boxes. The sequence is that of Transcriptional repressor NrdR from Methylobacterium sp. (strain 4-46).